A 104-amino-acid chain; its full sequence is Protein RnfH (104 aa).

This sequence belongs to the UPF0125 (RnfH) family.

The protein is Protein RnfH of Pseudomonas syringae pv. syringae (strain B728a).